The sequence spans 264 residues: Glutamate racemase (264 aa).

Residues 10–11 (DS) and 42–43 (YG) contribute to the substrate site. The Proton donor/acceptor role is filled by C73. 74 to 75 (NT) is a substrate binding site. C183 serves as the catalytic Proton donor/acceptor. A substrate-binding site is contributed by 184–185 (TH).

It belongs to the aspartate/glutamate racemases family.

The enzyme catalyses L-glutamate = D-glutamate. It participates in cell wall biogenesis; peptidoglycan biosynthesis. Its function is as follows. Provides the (R)-glutamate required for cell wall biosynthesis. This chain is Glutamate racemase, found in Streptococcus pyogenes serotype M3 (strain ATCC BAA-595 / MGAS315).